A 431-amino-acid polypeptide reads, in one-letter code: Serine hydroxymethyltransferase 1 (431 aa).

(6S)-5,6,7,8-tetrahydrofolate-binding positions include leucine 127 and 131–133 (GHL). Lysine 236 carries the N6-(pyridoxal phosphate)lysine modification. Glutamate 252 is a binding site for (6S)-5,6,7,8-tetrahydrofolate.

It belongs to the SHMT family. In terms of assembly, homodimer. The cofactor is pyridoxal 5'-phosphate.

The protein localises to the cytoplasm. It carries out the reaction (6R)-5,10-methylene-5,6,7,8-tetrahydrofolate + glycine + H2O = (6S)-5,6,7,8-tetrahydrofolate + L-serine. The protein operates within one-carbon metabolism; tetrahydrofolate interconversion. It functions in the pathway amino-acid biosynthesis; glycine biosynthesis; glycine from L-serine: step 1/1. Catalyzes the reversible interconversion of serine and glycine with tetrahydrofolate (THF) serving as the one-carbon carrier. This reaction serves as the major source of one-carbon groups required for the biosynthesis of purines, thymidylate, methionine, and other important biomolecules. Also exhibits THF-independent aldolase activity toward beta-hydroxyamino acids, producing glycine and aldehydes, via a retro-aldol mechanism. In Rhizobium meliloti (strain 1021) (Ensifer meliloti), this protein is Serine hydroxymethyltransferase 1.